We begin with the raw amino-acid sequence, 202 residues long: Holliday junction branch migration complex subunit RuvA (202 aa).

The segment at 1 to 62 (MYEYLHGLIT…DTAQTLYGFS (62 aa)) is domain I. Residues 63–141 (DFAEKQLFLK…DLAPATDDNT (79 aa)) form a domain II region. The flexible linker stretch occupies residues 142–151 (LFTPEVAPTT). A domain III region spans residues 152 to 202 (TENPQLADALAALTALGYRETAVKKITAQLRQFNGQTTNDYLSEGLRLLTK).

The protein belongs to the RuvA family. Homotetramer. Forms an RuvA(8)-RuvB(12)-Holliday junction (HJ) complex. HJ DNA is sandwiched between 2 RuvA tetramers; dsDNA enters through RuvA and exits via RuvB. An RuvB hexamer assembles on each DNA strand where it exits the tetramer. Each RuvB hexamer is contacted by two RuvA subunits (via domain III) on 2 adjacent RuvB subunits; this complex drives branch migration. In the full resolvosome a probable DNA-RuvA(4)-RuvB(12)-RuvC(2) complex forms which resolves the HJ.

It localises to the cytoplasm. In terms of biological role, the RuvA-RuvB-RuvC complex processes Holliday junction (HJ) DNA during genetic recombination and DNA repair, while the RuvA-RuvB complex plays an important role in the rescue of blocked DNA replication forks via replication fork reversal (RFR). RuvA specifically binds to HJ cruciform DNA, conferring on it an open structure. The RuvB hexamer acts as an ATP-dependent pump, pulling dsDNA into and through the RuvAB complex. HJ branch migration allows RuvC to scan DNA until it finds its consensus sequence, where it cleaves and resolves the cruciform DNA. This is Holliday junction branch migration complex subunit RuvA from Levilactobacillus brevis (strain ATCC 367 / BCRC 12310 / CIP 105137 / JCM 1170 / LMG 11437 / NCIMB 947 / NCTC 947) (Lactobacillus brevis).